A 280-amino-acid polypeptide reads, in one-letter code: Putative ABC transporter ATP-binding protein MTH_133 (280 aa).

The region spanning 6 to 241 (IEAVDIRYTY…IDTIRGANLR (236 aa)) is the ABC transporter domain. Residue 39-46 (GPNGAGKS) participates in ATP binding.

The protein belongs to the ABC transporter superfamily.

The protein localises to the cell membrane. Probably part of an ABC transporter complex. Responsible for energy coupling to the transport system. The chain is Putative ABC transporter ATP-binding protein MTH_133 from Methanothermobacter thermautotrophicus (strain ATCC 29096 / DSM 1053 / JCM 10044 / NBRC 100330 / Delta H) (Methanobacterium thermoautotrophicum).